Reading from the N-terminus, the 253-residue chain is Light-harvesting complex stress-related protein 1, chloroplastic (253 aa).

The N-terminal 39 residues, 1–39 (MAMMMRKAAAVPASSRRSVAVNSVSGKRTVSGKAGAPVP), are a transit peptide targeting the chloroplast. Residue Tyr45 participates in chlorophyll b binding. Phe60, Glu81, and His84 together coordinate chlorophyll a. Arg86 serves as a coordination point for chlorophyll b. A helical transmembrane segment spans residues 87-107 (VAMLAALGFIVGEQLQDFPLF). Gln124 contributes to the chlorophyll a binding site. Residues 131–151 (EPLLIAIGVAESYRVAVGWAT) form a helical membrane-spanning segment. Residues Glu141 and Arg144 each contribute to the chlorophyll b site. The chlorophyll a site is built by Lys190, Glu191, Asn194, Arg196, and Gln208. A helical transmembrane segment spans residues 197–217 (LAMIAIAAFVAQELVEQTEIF).

The protein belongs to the light-harvesting chlorophyll a/b-binding (LHC) protein family.

It localises to the plastid. It is found in the chloroplast thylakoid membrane. Required for non-photochemical quenching (NPQ), a mechanism that converts and dissipates the harmful excess absorbed light energy into heat and protect the photosynthetic apparatus from photo-oxidative damage. Is able to sense luminal acidification of the thylakoid membranes, which occurs along with elevated electron flow caused by excess light, and to induce a large, fast, and reversible pH-dependent quenching in LHCII-containing membranes. Mediates excitation energy transfer from light-harvesting complex II (LHCII) to photosystem I (PSI), rather than photosystem II (PSII), at low pH, which mimics the acidified lumen of the thylakoid membranes in high light-exposed chloroplasts. Activates PSI-dependent fluorescence quenching in addition to dissipating excitation energy in LHCII to avoid photooxidative stress under excess light. The protein is Light-harvesting complex stress-related protein 1, chloroplastic of Chlamydomonas reinhardtii (Chlamydomonas smithii).